Here is a 413-residue protein sequence, read N- to C-terminus: uncharacterized protein (413 aa).

This is an uncharacterized protein from Mycoplasma pneumoniae (strain ATCC 29342 / M129 / Subtype 1) (Mycoplasmoides pneumoniae).